A 543-amino-acid chain; its full sequence is Carboxypeptidase Y homolog A (543 aa).

A signal peptide spans 1-17 (MKFLTTGLLATAALAAA). Residues 18-124 (QEQQVLQAED…KLHNYDLRVK (107 aa)) constitute a propeptide that is removed on maturation. 5 disulfide bridges follow: Cys179–Cys419, Cys313–Cys327, Cys337–Cys360, Cys344–Cys353, and Cys382–Cys389. Asn210 carries an N-linked (GlcNAc...) asparagine glycan. Ser266 is a catalytic residue. Asp458 is a catalytic residue. Residue Asn509 is glycosylated (N-linked (GlcNAc...) asparagine). Residue His520 is part of the active site.

This sequence belongs to the peptidase S10 family.

It localises to the vacuole. The enzyme catalyses Release of a C-terminal amino acid with broad specificity.. Functionally, vacuolar carboxypeptidase involved in degradation of small peptides. Digests preferentially peptides containing an aliphatic or hydrophobic residue in P1' position, as well as methionine, leucine or phenylalanine in P1 position of ester substrate. This chain is Carboxypeptidase Y homolog A (CPYA), found in Trichophyton equinum (Horse ringworm fungus).